Here is a 100-residue protein sequence, read N- to C-terminus: Large ribosomal subunit protein uL23 (100 aa).

This sequence belongs to the universal ribosomal protein uL23 family. As to quaternary structure, part of the 50S ribosomal subunit. Contacts protein L29, and trigger factor when it is bound to the ribosome.

Functionally, one of the early assembly proteins it binds 23S rRNA. One of the proteins that surrounds the polypeptide exit tunnel on the outside of the ribosome. Forms the main docking site for trigger factor binding to the ribosome. The chain is Large ribosomal subunit protein uL23 from Mycolicibacterium smegmatis (strain ATCC 700084 / mc(2)155) (Mycobacterium smegmatis).